The following is a 327-amino-acid chain: Zinc transport protein ZntB (327 aa).

The Cytoplasmic segment spans residues 1 to 273 (MEAIKGSDVN…ARRTYTMSLM (273 aa)). Residues 274–294 (AMVFLPSTFLTGLFGVNLGGI) traverse the membrane as a helical segment. Residues 295–300 (PGGGWR) lie on the Periplasmic side of the membrane. The chain crosses the membrane as a helical span at residues 301-321 (FGFSLFCILLVVLIGGVTLWL). Topologically, residues 322–327 (HRSKWL) are cytoplasmic.

Belongs to the CorA metal ion transporter (MIT) (TC 1.A.35) family.

It localises to the cell inner membrane. It catalyses the reaction Zn(2+)(out) + H(+)(out) = Zn(2+)(in) + H(+)(in). Zinc transporter. Acts as a Zn(2+):proton symporter, which likely mediates zinc ion uptake. This chain is Zinc transport protein ZntB, found in Salmonella agona (strain SL483).